The sequence spans 549 residues: uncharacterized protein (549 aa).

12 helical membrane passes run 27 to 47 (ILRF…YVFV), 108 to 128 (PIVV…GVIF), 146 to 166 (TGLV…LAIA), 197 to 217 (AVAI…IPML), 233 to 253 (FIAI…FLLV), 265 to 285 (VAAI…LISL), 308 to 328 (FLVI…LSIL), 352 to 372 (LVLL…IFGV), 399 to 419 (TLLV…VGLG), 434 to 454 (LMLA…VAIG), 472 to 492 (IVSL…FQAI), and 501 to 521 (IFIW…VLIG).

The protein localises to the cell membrane. This is an uncharacterized protein from Mycoplasma pneumoniae (strain ATCC 29342 / M129 / Subtype 1) (Mycoplasmoides pneumoniae).